Reading from the N-terminus, the 147-residue chain is 3-dehydroquinate dehydratase (147 aa).

Tyr23 acts as the Proton acceptor in catalysis. Positions 75, 81, and 88 each coordinate substrate. His101 (proton donor) is an active-site residue. Substrate contacts are provided by residues 102–103 (LS) and Arg112.

It belongs to the type-II 3-dehydroquinase family. As to quaternary structure, homododecamer.

The enzyme catalyses 3-dehydroquinate = 3-dehydroshikimate + H2O. It functions in the pathway metabolic intermediate biosynthesis; chorismate biosynthesis; chorismate from D-erythrose 4-phosphate and phosphoenolpyruvate: step 3/7. Catalyzes a trans-dehydration via an enolate intermediate. The sequence is that of 3-dehydroquinate dehydratase from Nitrosococcus oceani (strain ATCC 19707 / BCRC 17464 / JCM 30415 / NCIMB 11848 / C-107).